We begin with the raw amino-acid sequence, 113 residues long: N-alpha-acetyltransferase 38-A, NatC auxiliary subunit (113 aa).

Residues 1 to 29 (MAAVLEENGCSRQSSPSAGDSDAEPGDTA) form a disordered region. Positions 28 to 106 (TARHKLESLL…IVSIQVELES (79 aa)) constitute a Sm domain.

The protein belongs to the snRNP Sm proteins family. Component of the N-terminal acetyltransferase C (NatC) complex, which is composed of naa35, naa38 and naa30.

The protein localises to the cytoplasm. Functionally, auxillary component of the N-terminal acetyltransferase C (NatC) complex which catalyzes acetylation of N-terminal methionine residues. The sequence is that of N-alpha-acetyltransferase 38-A, NatC auxiliary subunit (naa38-a) from Xenopus laevis (African clawed frog).